The primary structure comprises 56 residues: Ribosome modulation factor (56 aa).

Belongs to the ribosome modulation factor family.

It is found in the cytoplasm. Functionally, during stationary phase, converts 70S ribosomes to an inactive dimeric form (100S ribosomes). In Serratia proteamaculans (strain 568), this protein is Ribosome modulation factor.